A 237-amino-acid polypeptide reads, in one-letter code: Apoptosis regulator OPG045 (237 aa).

Belongs to the orthopoxvirus OPG045 family. In terms of assembly, interacts with host BAK1, BAX and BID.

It localises to the host mitochondrion outer membrane. The protein resides in the host cytoplasm. In terms of biological role, plays a role in the inhibition of host apoptosis. Interacts with host BAX and thereby inhibits its activity. This Homo sapiens (Human) protein is Apoptosis regulator OPG045 (OPG045).